The following is a 416-amino-acid chain: F-box/FBD/LRR-repeat protein At1g13570 (416 aa).

One can recognise an F-box domain in the interval 5-53; sequence PDFISDLPQSIIENILTRLSIRDAIRTSVLSSKWRYKWSTLTDLVFDEK. LRR repeat units follow at residues 115-142, 164-189, 203-229, 238-263, and 294-321; these read VLKL…ELCH, QILV…SLSY, MYLY…SVSM, FEQS…VGYI, and CFED…KVSA. The FBD domain maps to 346-384; the sequence is LPSLESVKITDASGIRYELEFIRFLLGTSPVLETVTVSS.

The polypeptide is F-box/FBD/LRR-repeat protein At1g13570 (Arabidopsis thaliana (Mouse-ear cress)).